Consider the following 288-residue polypeptide: Small ribosomal subunit protein uS15m (288 aa).

The transit peptide at Met-1 to Lys-50 directs the protein to the mitochondrion.

The protein belongs to the universal ribosomal protein uS15 family. Component of the mitochondrial small ribosomal subunit (mt-SSU). Mature yeast 74S mitochondrial ribosomes consist of a small (37S) and a large (54S) subunit. The 37S small subunit contains a 15S ribosomal RNA (15S mt-rRNA) and at least 32 different proteins. The 54S large subunit contains a 21S rRNA (21S mt-rRNA) and at least 45 different proteins.

The protein localises to the mitochondrion. In terms of biological role, component of the mitochondrial ribosome (mitoribosome), a dedicated translation machinery responsible for the synthesis of mitochondrial genome-encoded proteins, including at least some of the essential transmembrane subunits of the mitochondrial respiratory chain. The mitoribosomes are attached to the mitochondrial inner membrane and translation products are cotranslationally integrated into the membrane. This is Small ribosomal subunit protein uS15m (mrps28) from Schizosaccharomyces pombe (strain 972 / ATCC 24843) (Fission yeast).